A 235-amino-acid polypeptide reads, in one-letter code: Large ribosomal subunit protein uL1 (235 aa).

This sequence belongs to the universal ribosomal protein uL1 family. Part of the 50S ribosomal subunit.

In terms of biological role, binds directly to 23S rRNA. The L1 stalk is quite mobile in the ribosome, and is involved in E site tRNA release. Protein L1 is also a translational repressor protein, it controls the translation of the L11 operon by binding to its mRNA. In Desulfotalea psychrophila (strain LSv54 / DSM 12343), this protein is Large ribosomal subunit protein uL1.